The sequence spans 190 residues: Recombination protein RecR (190 aa).

The segment at 58–73 (CEQCGALSENELCEIC) adopts a C4-type zinc-finger fold. One can recognise a Toprim domain in the interval 81 to 167 (NILCIVESPK…TFSKIAQGIP (87 aa)).

Belongs to the RecR family.

In terms of biological role, may play a role in DNA repair. It seems to be involved in an RecBC-independent recombinational process of DNA repair. It may act with RecF and RecO. This is Recombination protein RecR from Campylobacter jejuni subsp. jejuni serotype O:23/36 (strain 81-176).